The sequence spans 68 residues: Beta-defensin 1 (68 aa).

A signal peptide spans 1-21 (MRTSYLLLFTLCLLLSEMASG). Residues 22–32 (DNFLTGLGHRS) constitute a propeptide that is removed on maturation. 3 disulfides stabilise this stretch: Cys-37–Cys-66, Cys-44–Cys-59, and Cys-49–Cys-67.

The protein belongs to the beta-defensin family. In terms of assembly, monomer. Homodimer.

Its subcellular location is the secreted. It is found in the membrane. Its function is as follows. Has bactericidal activity. May act as a ligand for C-C chemokine receptor CCR6. Positively regulates the sperm motility and bactericidal activity in a CCR6-dependent manner. Binds to CCR6 and triggers Ca2+ mobilization in the sperm which is important for its motility. This Hylobates moloch (Silvery gibbon) protein is Beta-defensin 1 (DEFB1).